A 407-amino-acid polypeptide reads, in one-letter code: Arginine deiminase (407 aa).

Cysteine 397 acts as the Amidino-cysteine intermediate in catalysis.

Belongs to the arginine deiminase family.

The protein resides in the cytoplasm. The catalysed reaction is L-arginine + H2O = L-citrulline + NH4(+). It participates in amino-acid degradation; L-arginine degradation via ADI pathway; carbamoyl phosphate from L-arginine: step 1/2. In Pediococcus pentosaceus (strain ATCC 25745 / CCUG 21536 / LMG 10740 / 183-1w), this protein is Arginine deiminase.